Reading from the N-terminus, the 55-residue chain is ATP synthase small subunit 6-A, mitochondrial (55 aa).

A mitochondrion-targeting transit peptide spans 1 to 11 (MRLFDPWPVFF). Residues 21–39 (FLTGFAVTGVLITKLTAGL) form a helical membrane-spanning segment.

This sequence belongs to the ATPase 6 subunit family.

The protein resides in the mitochondrion inner membrane. In terms of biological role, mitochondrial membrane ATP synthase (F(1)F(0) ATP synthase or Complex V) produces ATP from ADP in the presence of a proton gradient across the membrane which is generated by electron transport complexes of the respiratory chain. F-type ATPases consist of two structural domains, F(1) - containing the extramembraneous catalytic core and F(0) - containing the membrane proton channel, linked together by a central stalk and a peripheral stalk. During catalysis, ATP synthesis in the catalytic domain of F(1) is coupled via a rotary mechanism of the central stalk subunits to proton translocation. Part of the complex F(0) domain. Confers tolerance to several abiotic stresses (e.g. salt, mannitol, drought, oxidative and cold stresses), probably by providing additional energy needed for cell homeostasis. In Arabidopsis thaliana (Mouse-ear cress), this protein is ATP synthase small subunit 6-A, mitochondrial.